A 314-amino-acid polypeptide reads, in one-letter code: Solute carrier family 25 member 44 (314 aa).

3 Solcar repeats span residues 18–100, 107–210, and 220–302; these read KKFY…TRKF, SNTV…YAEQ, and PHIV…LKKL. 6 helical membrane passes run 20 to 42, 71 to 90, 113 to 133, 185 to 201, 222 to 239, and 278 to 296; these read FYVF…TLIR, TGLY…GQCY, LVAG…IDVV, GYVA…AVWW, IVFQ…ASIL, and LSAR…VVGY.

This sequence belongs to the mitochondrial carrier (TC 2.A.29) family.

Its subcellular location is the mitochondrion membrane. The enzyme catalyses L-valine(in) = L-valine(out). It catalyses the reaction L-leucine(in) = L-leucine(out). In terms of biological role, mitochondrial solute transporter which transports branched-chain amino acid (BCAA; valine, leucine and isoleucine) into mitochondria in brown adipose tissue (BAT). BAT is involved in BCAA catabolism and actively utilizes BCAA in the mitochondria for thermogenesis. In Homo sapiens (Human), this protein is Solute carrier family 25 member 44.